Consider the following 310-residue polypeptide: Bis(hydroxyethyl) terephthalate hydrolase (310 aa).

The segment at residues 1-48 is a signal peptide (tat-type signal); that stretch reads MQQNPHTHAAPGAARPVLRGVRRRLAAVTAAVAAVLVLGTLTGPGAQA. Residue phenylalanine 111 participates in bis(2-hydroxyethyl) terephthalate binding. Serine 179 functions as the Nucleophile in the catalytic mechanism. Bis(2-hydroxyethyl) terephthalate-binding residues include methionine 180 and tryptophan 204. Residues aspartate 225 and histidine 257 each act as charge relay system in the active site. An intrachain disulfide couples cysteine 290 to cysteine 306.

It belongs to the AB hydrolase superfamily. Predicted to be exported by the Tat system. The position of the signal peptide cleavage has not been experimentally proven.

The protein resides in the secreted. The catalysed reaction is bis(2-hydroxyethyl) terephthalate + H2O = 4-[(2-hydroxyethoxy)carbonyl]benzoate + ethylene glycol + H(+). Functionally, catalyzes the degradation of bis(hydroxyethyl) terephthalate (BHET), a derived-oligomer of the plastic poly(ethylene terephthalate) (PET), hydrolyzing BHET to mono(2-hydroxyethyl) terephthalate (MHET). Shows no activity against PET. This Streptomyces coelicolor (strain ATCC BAA-471 / A3(2) / M145) protein is Bis(hydroxyethyl) terephthalate hydrolase.